A 422-amino-acid chain; its full sequence is Serine hydroxymethyltransferase (422 aa).

Position 120-122 (Gly-120–Ile-122) interacts with (6S)-5,6,7,8-tetrahydrofolate. Residue Lys-226 is modified to N6-(pyridoxal phosphate)lysine. A (6S)-5,6,7,8-tetrahydrofolate-binding site is contributed by Glu-241.

This sequence belongs to the SHMT family. Homodimer. Requires pyridoxal 5'-phosphate as cofactor.

It is found in the cytoplasm. The catalysed reaction is 5,10-methylenetetrahydromethanopterin + glycine + H2O = 5,6,7,8-tetrahydromethanopterin + L-serine. The protein operates within amino-acid biosynthesis; glycine biosynthesis; glycine from L-serine: step 1/1. Catalyzes the reversible interconversion of serine and glycine with tetrahydromethanopterin (H4MPT) serving as the one-carbon carrier. Also exhibits a pteridine-independent aldolase activity toward beta-hydroxyamino acids, producing glycine and aldehydes, via a retro-aldol mechanism. This is Serine hydroxymethyltransferase from Methanosphaera stadtmanae (strain ATCC 43021 / DSM 3091 / JCM 11832 / MCB-3).